The primary structure comprises 484 residues: Ornithine decarboxylase (484 aa).

At lysine 114 the chain carries N6-(pyridoxal phosphate)lysine. Residues serine 245, glycine 282, and glutamate 315–arginine 318 each bind pyridoxal 5'-phosphate. Position 381–382 (phenylalanine 381–aspartate 382) interacts with substrate. Cysteine 422 acts as the Proton donor; shared with dimeric partner in catalysis. Residue aspartate 423 coordinates substrate. Position 452 (tyrosine 452) interacts with pyridoxal 5'-phosphate.

It belongs to the Orn/Lys/Arg decarboxylase class-II family. In terms of assembly, homodimer. Only the dimer is catalytically active, as the active sites are constructed of residues from both monomers. The cofactor is pyridoxal 5'-phosphate.

Its subcellular location is the cytoplasm. The catalysed reaction is L-ornithine + H(+) = putrescine + CO2. The protein operates within amine and polyamine biosynthesis; putrescine biosynthesis via L-ornithine pathway; putrescine from L-ornithine: step 1/1. Inhibited by antizyme (AZ) OAZ1 in response to polyamine levels. AZ inhibits the assembly of the functional homodimer by binding to ODC monomers and targeting them for ubiquitin-independent proteolytic destruction by the 26S proteasome. Catalyzes the first and rate-limiting step of polyamine biosynthesis that converts ornithine into putrescine, which is the precursor for the polyamines, spermidine and spermine. Polyamines are essential for cell proliferation and are implicated in cellular processes, ranging from DNA replication to apoptosis. The polypeptide is Ornithine decarboxylase (spe-1) (Neurospora crassa (strain ATCC 24698 / 74-OR23-1A / CBS 708.71 / DSM 1257 / FGSC 987)).